The primary structure comprises 279 residues: Glutamate racemase (279 aa).

Substrate contacts are provided by residues 13–14 (DS) and 45–46 (YG). Catalysis depends on Cys76, which acts as the Proton donor/acceptor. 77–78 (NT) lines the substrate pocket. Catalysis depends on Cys185, which acts as the Proton donor/acceptor. 186–187 (TH) is a binding site for substrate.

The protein belongs to the aspartate/glutamate racemases family.

It carries out the reaction L-glutamate = D-glutamate. Its pathway is cell wall biogenesis; peptidoglycan biosynthesis. Functionally, provides the (R)-glutamate required for cell wall biosynthesis. The protein is Glutamate racemase of Synechocystis sp. (strain ATCC 27184 / PCC 6803 / Kazusa).